A 365-amino-acid polypeptide reads, in one-letter code: tRNA/tmRNA (uracil-C(5))-methyltransferase (365 aa).

S-adenosyl-L-methionine-binding residues include glutamine 188, tyrosine 216, asparagine 221, glutamate 237, and aspartate 297. The active-site Nucleophile is cysteine 322. Glutamate 356 serves as the catalytic Proton acceptor.

It belongs to the class I-like SAM-binding methyltransferase superfamily. RNA M5U methyltransferase family. TrmA subfamily.

The enzyme catalyses uridine(54) in tRNA + S-adenosyl-L-methionine = 5-methyluridine(54) in tRNA + S-adenosyl-L-homocysteine + H(+). It catalyses the reaction uridine(341) in tmRNA + S-adenosyl-L-methionine = 5-methyluridine(341) in tmRNA + S-adenosyl-L-homocysteine + H(+). Functionally, dual-specificity methyltransferase that catalyzes the formation of 5-methyluridine at position 54 (m5U54) in all tRNAs, and that of position 341 (m5U341) in tmRNA (transfer-mRNA). This Aggregatibacter aphrophilus (strain NJ8700) (Haemophilus aphrophilus) protein is tRNA/tmRNA (uracil-C(5))-methyltransferase.